Here is a 1182-residue protein sequence, read N- to C-terminus: Tyrosine-protein kinase ABL2 (1182 aa).

The disordered stretch occupies residues 1-42; the sequence is MGQQVGRVGEAPGLQQPQPRGIRGSSAARPSGRRRDPAGRTA. Gly2 carries the N-myristoyl glycine lipid modification. Residues 2–106 are CAP; sequence GQQVGRVGEA…SKENLLGATE (105 aa). Positions 20-30 are enriched in low complexity; it reads RGIRGSSAARP. Residue Ser97 is modified to Phosphoserine. Residues 107-167 enclose the SH3 domain; the sequence is SDPNLFVALY…PSNYITPVNS (61 aa). 6 positions are modified to phosphotyrosine: Tyr116, Tyr161, Tyr174, Tyr185, Tyr218, and Tyr231. The SH2 domain occupies 173–263; sequence WYHGPVSRSA…GLVTTLHYPA (91 aa). Residue Tyr261 is modified to Phosphotyrosine; by ABL1 and autocatalysis. Residue Tyr272 is modified to Phosphotyrosine; by autocatalysis. Ser275 carries the post-translational modification Phosphoserine. Residues 288–539 form the Protein kinase domain; it reads ITMKHKLGGG…PSFAETHQAF (252 aa). 294–302 lines the ATP pocket; it reads LGGGQYGEV. A phosphotyrosine mark is found at Tyr299 and Tyr303. Residues Lys317 and 362–368 contribute to the ATP site; that span reads EYMPYGN. The active-site Proton acceptor is the Asp409. The Kinase activation loop signature appears at 427–451; sequence DFGLSRLMTGDTYTAHAGAKFPIKW. Position 439 is a phosphotyrosine; by autocatalysis and SRC-type Tyr-kinases (Tyr439). At Tyr459 the chain carries Phosphotyrosine. Residue Tyr568 is modified to Phosphotyrosine; by autocatalysis. Residues Ser606, Ser621, Ser632, Ser634, and Ser656 each carry the phosphoserine modification. Disordered regions lie at residues 612-642 and 655-674; these read IRST…DAKE and SSFM…SSFR. A Nuclear localization signal motif is present at residues 659–661; sequence KKR. Ser670, Ser671, and Ser672 each carry phosphoserine. The residue at position 684 (Tyr684) is a Phosphotyrosine; by autocatalysis. Positions 695–930 are F-actin-binding; the sequence is SLQNADGFSV…AVLPTTHNHK (236 aa). Tyr719 carries the post-translational modification Phosphotyrosine. The disordered stretch occupies residues 765 to 796; sequence LRAGKPTASDDTSKPFPRSNSTSSMSSGLPEQ. Residue Lys778 is modified to N6-acetyllysine. The segment covering 782–793 has biased composition (polar residues); it reads RSNSTSSMSSGL. Position 785 is a phosphoserine (Ser785). Position 802 is a phosphothreonine (Thr802). Residues 809 to 825 are compositionally biased toward polar residues; the sequence is RSKLQLERTVSTSSQPE. Residues 809 to 858 form a disordered region; sequence RSKLQLERTVSTSSQPEENVDRANDMLPKKSEEGAAPARERPKAKLLPRG. Ser819 and Ser822 each carry phosphoserine. The span at 827 to 851 shows a compositional bias: basic and acidic residues; it reads NVDRANDMLPKKSEEGAAPARERPK. Ser915 and Ser936 each carry phosphoserine. The segment at 964–1059 is disordered; it reads HQVTSSGDKD…TSSISPAKMA (96 aa). Residues 1020 to 1182 form an F-actin-binding region; sequence EGGKKAAPGP…VQEISDVVQR (163 aa).

Belongs to the protein kinase superfamily. Tyr protein kinase family. ABL subfamily. As to quaternary structure, interacts with PSMA7. Interacts with CTTN. Found in a complex with ABL1, ABL2, CRK and UNC119; leading to the inhibition of CRK phosphorylation by ABL kinases. The cofactor is Mg(2+). Mn(2+) serves as cofactor. In terms of processing, phosphorylated at Tyr-261 by ABL1 in response to oxidative stress. Phosphorylated by PDGFRB. Post-translationally, polyubiquitinated. Polyubiquitination of ABL2 leads to degradation. In terms of tissue distribution, most abundant in adult mouse brain, especially in synapse-rich regions.

The protein resides in the cytoplasm. It is found in the cytoskeleton. The catalysed reaction is L-tyrosyl-[protein] + ATP = O-phospho-L-tyrosyl-[protein] + ADP + H(+). With respect to regulation, stabilized in the inactive form by an association between the SH3 domain and the SH2-TK linker region, interactions of the N-terminal cap, and contributions from an N-terminal myristoyl group and phospholipids. Activated by autophosphorylation as well as by SRC-family kinase-mediated phosphorylation. Activated by RIN1 binding to the SH2 and SH3 domains. Inhibited by imatinib mesylate (Gleevec). Phosphatidylinositol 4,5-bisphosphate (PIP2), a highly abundant phosphoinositide known to regulate cytoskeletal and membrane proteins, inhibits the tyrosine kinase activity. Functionally, non-receptor tyrosine-protein kinase that plays an ABL1-overlapping role in key processes linked to cell growth and survival such as cytoskeleton remodeling in response to extracellular stimuli, cell motility and adhesion, receptor endocytosis, autophagy, DNA damage response and apoptosis. Coordinates actin remodeling through tyrosine phosphorylation of proteins controlling cytoskeleton dynamics like MYH10 (involved in movement); CTTN (involved in signaling); or TUBA1 and TUBB (microtubule subunits). Binds directly F-actin and regulates actin cytoskeletal structure through its F-actin-bundling activity. Involved in the regulation of cell adhesion and motility through phosphorylation of key regulators of these processes such as CRK, CRKL or DOK1. Required for adhesion-dependent phosphorylation of ARHGAP35 which promotes its association with RASA1, resulting in recruitment of ARHGAP35 to the cell periphery where it inhibits RHO. Phosphorylates multiple receptor tyrosine kinases like PDGFRB and other substrates which are involved in endocytosis regulation such as RIN1. In brain, may regulate neurotransmission by phosphorylating proteins at the synapse. Finally, functions as its own regulator through autocatalytic activity as well as through phosphorylation of its inhibitor, ABI1. Positively regulates chemokine-mediated T-cell migration, polarization, and homing to lymph nodes and immune-challenged tissues, potentially via activation of NEDD9/HEF1 and RAP1. This Mus musculus (Mouse) protein is Tyrosine-protein kinase ABL2.